Reading from the N-terminus, the 237-residue chain is H/ACA ribonucleoprotein complex subunit 1 (237 aa).

2 stretches are compositionally biased toward gly residues: residues 1-59 and 172-237; these read MGFG…GGRG and RGGG…RGRW. Disordered regions lie at residues 1-64 and 157-237; these read MGFG…FDTG and KPPQ…RGRW. RGG-box stretches follow at residues 4–56 and 166–236; these read GKPR…GRGG and KAFT…GRGR.

Belongs to the GAR1 family. In terms of assembly, component of the box H/ACA small nucleolar ribonucleoprotein (H/ACA snoRNP) complex consisting of Nop60B, Gar1, NPH2 and Nop10, and associated with H/ACA-type snoRNAs.

The protein resides in the nucleus. Its subcellular location is the nucleolus. Its function is as follows. Component of the box H/ACA small nucleolar ribonucleoprotein (H/ACA snoRNP) complex, which catalyzes pseudouridylation of rRNA. This involves the isomerization of uridine such that the ribose is subsequently attached to C5, instead of the normal N1. Pseudouridine ('psi') residues may serve to stabilize the conformation of rRNAs. Required for ribosome biogenesis. H/ACA snoRNP complex-dependent ribosome biogenesis is important in female germline cell differentiation during oogenesis. In Drosophila melanogaster (Fruit fly), this protein is H/ACA ribonucleoprotein complex subunit 1.